We begin with the raw amino-acid sequence, 359 residues long: Putative nucleotidyltransferase MAB21L1 (359 aa).

Residues Arg23–Lys24 and Phe63–Leu66 contribute to the a ribonucleoside 5'-triphosphate site. Mg(2+) contacts are provided by Glu73 and Glu75. Residues Lys248 and Ser252–Lys255 contribute to the a ribonucleoside 5'-triphosphate site.

The protein belongs to the mab-21 family. Monomer. Homodecamer; composed of 2 back to back homopentamers. The protein may exist as monomer in solution and oiligomerizes upon ligand binding.

It is found in the nucleus. Functionally, putative nucleotidyltransferase required for several aspects of embryonic development including normal development of the eye. It is unclear whether it displays nucleotidyltransferase activity in vivo. Binds single-stranded RNA (ssRNA). The chain is Putative nucleotidyltransferase MAB21L1 (mab21l1) from Danio rerio (Zebrafish).